Reading from the N-terminus, the 369-residue chain is MEGSWRDVLAVLVILAQLTVSGSSYQIIEGPRNVTALKGSEARFNCTVTHGWKLIMWALNGIVELSLTSQKPIITSNRFTSASYNSTDSFISEMIIHNVQLNDSGPVQCSLQNSNVFGFAFLSVQVMGTLNIPSSNLIVTEGEPCNVTCYAVGWTPLPNISWELEVPVSHSSYYSFLEPGNSLRVLSVLDLTPLGNGTLTCVAEMKDLQASESLTVNLTVVQPPPDSIGGEGQALPTWAIILLAVAFSLLLILIIALIIIFCCCCVSRREKEESTYQNEIRKSANVRTGKADPETWLKSGKENYGYKSDEARAAQIASLPPKSGEVSLPEQRSSLPQQELDKHRPSPVTHPRVSFDIASPQKIRNVTIV.

An N-terminal signal peptide occupies residues 1–24; sequence MEGSWRDVLAVLVILAQLTVSGSS. Ig-like V-type domains are found at residues 25–125 and 128–217; these read YQII…LSVQ and GTLN…LTVN. Over 25-239 the chain is Extracellular; it reads YQIIEGPRNV…GEGQALPTWA (215 aa). N-linked (GlcNAc...) asparagine glycosylation is found at Asn-33 and Asn-45. Cys-46 and Cys-109 form a disulfide bridge. Asn-146, Asn-196, and Asn-217 each carry an N-linked (GlcNAc...) asparagine glycan. Cys-149 and Cys-201 are joined by a disulfide. Residues 240–260 traverse the membrane as a helical segment; sequence IILLAVAFSLLLILIIALIII. Over 261–369 the chain is Cytoplasmic; sequence FCCCCVSRRE…PQKIRNVTIV (109 aa). Residues 321-354 form a disordered region; that stretch reads PKSGEVSLPEQRSSLPQQELDKHRPSPVTHPRVS.

It belongs to the immunoglobulin superfamily. In terms of assembly, interacts with MAGI1 at tight junctions, forms a tripartite complex with NPHS1. Interacts with LNX1 isoform 2 via its PDZ 2 domain, it may also interact with other isoforms containing this domain. As to expression, in kidney, it is found in glomeruli and in the proximal tubules (at protein level).

Its subcellular location is the apical cell membrane. It is found in the cell junction. The protein resides in the tight junction. In terms of biological role, provides, together with MAGI1, an adhesion machinery at tight junctions, which may regulate the permeability of kidney glomerulus and small intestinal epithelial cells. Mediates calcium-independent homophilic cell adhesion. In testis, it may function as a cell adhesion molecule rather than a tight-junction protein. It may participate in the adhesion between spermatogonia-spermatogonia, spermatogonia-Sertoli cells, and Sertoli cells-Sertoli cells. The protein is Immunoglobulin superfamily member 5 (Igsf5) of Rattus norvegicus (Rat).